A 178-amino-acid chain; its full sequence is MTEIPSSFVLPDPEWIYRVGIGQDSHRFLPDEDPKPCILGGIIFENTPGFEANSDGDVVFHAICNAFSSVTHKGILGGLADELLKTKGITDSVVYLQEAVASLKPTQQVSHLAITIEGKRPKLLPQLPSMRKRIAEVLHIPLDSINITATSGEGLTAMGQGYGVQCFCVLTIMEYCRY.

Positions 24, 26, and 61 each coordinate a divalent metal cation. 24 to 26 is a binding site for 4-CDP-2-C-methyl-D-erythritol 2-phosphate; sequence DSH. 150–153 is a 4-CDP-2-C-methyl-D-erythritol 2-phosphate binding site; sequence TSGE.

The protein belongs to the IspF family. Homotrimer. A divalent metal cation is required as a cofactor.

The catalysed reaction is 4-CDP-2-C-methyl-D-erythritol 2-phosphate = 2-C-methyl-D-erythritol 2,4-cyclic diphosphate + CMP. Its pathway is isoprenoid biosynthesis; isopentenyl diphosphate biosynthesis via DXP pathway; isopentenyl diphosphate from 1-deoxy-D-xylulose 5-phosphate: step 4/6. Its function is as follows. Involved in the biosynthesis of isopentenyl diphosphate (IPP) and dimethylallyl diphosphate (DMAPP), two major building blocks of isoprenoid compounds. Catalyzes the conversion of 4-diphosphocytidyl-2-C-methyl-D-erythritol 2-phosphate (CDP-ME2P) to 2-C-methyl-D-erythritol 2,4-cyclodiphosphate (ME-CPP) with a corresponding release of cytidine 5-monophosphate (CMP). This is 2-C-methyl-D-erythritol 2,4-cyclodiphosphate synthase from Chlamydia trachomatis serovar A (strain ATCC VR-571B / DSM 19440 / HAR-13).